We begin with the raw amino-acid sequence, 113 residues long: Ig kappa chain V-II region MOPC 511 (113 aa).

Residues 1-23 (DIVITQDELSKPVTSGESVSISC) are framework-1. Cys-23 and Cys-93 are oxidised to a cystine. Residues 24–39 (RSSKSLLYKDGKTYLN) are complementarity-determining-1. The interval 40–54 (WFLQGPQQSPRLLIY) is framework-2. A complementarity-determining-2 region spans residues 55–61 (LMSTRAS). Residues 62 to 93 (GVSDRFSGSGSGTDFTLEISRVKAEDVGVYYC) form a framework-3 region. The segment at 94–102 (QQLVEYPLT) is complementarity-determining-3. Residues 103 to 112 (FGAGTKLELK) form a framework-4 region.

The sequence is that of Ig kappa chain V-II region MOPC 511 from Mus musculus (Mouse).